The primary structure comprises 104 residues: Large ribosomal subunit protein eL30 (104 aa).

Belongs to the eukaryotic ribosomal protein eL30 family.

The polypeptide is Large ribosomal subunit protein eL30 (rpl30e) (Sulfolobus acidocaldarius (strain ATCC 33909 / DSM 639 / JCM 8929 / NBRC 15157 / NCIMB 11770)).